A 636-amino-acid polypeptide reads, in one-letter code: Translation factor GUF1, mitochondrial (636 aa).

A tr-type G domain is found at 35–218 (SNYRNFSIVA…AIIRDIPGPR (184 aa)). GTP contacts are provided by residues 44–51 (AHVDHGKS), 111–115 (DTPGH), and 165–168 (NKID).

Belongs to the TRAFAC class translation factor GTPase superfamily. Classic translation factor GTPase family. LepA subfamily.

The protein localises to the mitochondrion inner membrane. It catalyses the reaction GTP + H2O = GDP + phosphate + H(+). Functionally, promotes mitochondrial protein synthesis. May act as a fidelity factor of the translation reaction, by catalyzing a one-codon backward translocation of tRNAs on improperly translocated ribosomes. Binds to mitochondrial ribosomes in a GTP-dependent manner. The chain is Translation factor GUF1, mitochondrial from Debaryomyces hansenii (strain ATCC 36239 / CBS 767 / BCRC 21394 / JCM 1990 / NBRC 0083 / IGC 2968) (Yeast).